A 388-amino-acid chain; its full sequence is Na(+)/H(+) antiporter NhaA (388 aa).

Helical transmembrane passes span 8–28 (FFSAASGGAIILLLSALLGLL), 57–77 (LAEFISIAPMSLFFFVVIAEI), 93–113 (ILPLISALGGMMIPACLYGLI), 123–143 (GWAIPIATDAAFTLPIILALG), 152–172 (VWLMALAIFDDLLGIVVIALF), 175–195 (SHLNGYALFAAGLITAVMIGL), 210–230 (GVVLWWALLVSGLHPTIAGVI), 254–274 (IIAPWVTWLILPLFGFVSMGM), 278–298 (AMSFHVLLAPVPLGVALGLFL), 328–348 (LFGLSLLCGIGFTISLFIAEL), and 361–381 (YGILMGSLLSALAGWLWLRFL).

This sequence belongs to the NhaA Na(+)/H(+) (TC 2.A.33) antiporter family.

It is found in the cell inner membrane. The enzyme catalyses Na(+)(in) + 2 H(+)(out) = Na(+)(out) + 2 H(+)(in). Its function is as follows. Na(+)/H(+) antiporter that extrudes sodium in exchange for external protons. In Zymomonas mobilis subsp. mobilis (strain ATCC 31821 / ZM4 / CP4), this protein is Na(+)/H(+) antiporter NhaA.